Reading from the N-terminus, the 214-residue chain is Adenylate kinase (214 aa).

10–15 (GAGKGT) provides a ligand contact to ATP. An NMP region spans residues 30–59 (STGDMLRGAIKAGTDLGKQAKTLMDAGQLV). Residues T31, R36, 57–59 (QLV), 85–88 (GFPR), and Q92 each bind AMP. Residues 122 to 159 (GRRVHQASGRTYHVVYNPPKVEGKDDVTGEDLIIRADD) form an LID region. Residues R123 and 132–133 (TY) each bind ATP. AMP contacts are provided by R156 and R167. K200 contacts ATP.

This sequence belongs to the adenylate kinase family. As to quaternary structure, monomer.

Its subcellular location is the cytoplasm. It carries out the reaction AMP + ATP = 2 ADP. Its pathway is purine metabolism; AMP biosynthesis via salvage pathway; AMP from ADP: step 1/1. Its function is as follows. Catalyzes the reversible transfer of the terminal phosphate group between ATP and AMP. Plays an important role in cellular energy homeostasis and in adenine nucleotide metabolism. In Pasteurella multocida (strain Pm70), this protein is Adenylate kinase.